The primary structure comprises 444 residues: Glutamate dehydrogenase (444 aa).

Lysine 124 is an active-site residue.

Belongs to the Glu/Leu/Phe/Val dehydrogenases family. In terms of assembly, homohexamer.

It catalyses the reaction L-glutamate + NAD(+) + H2O = 2-oxoglutarate + NH4(+) + NADH + H(+). It carries out the reaction L-glutamate + NADP(+) + H2O = 2-oxoglutarate + NH4(+) + NADPH + H(+). The polypeptide is Glutamate dehydrogenase (gdhA) (Bacteroides thetaiotaomicron (strain ATCC 29148 / DSM 2079 / JCM 5827 / CCUG 10774 / NCTC 10582 / VPI-5482 / E50)).